A 61-amino-acid polypeptide reads, in one-letter code: Large ribosomal subunit protein uL30 (61 aa).

Belongs to the universal ribosomal protein uL30 family. As to quaternary structure, part of the 50S ribosomal subunit.

In Colwellia psychrerythraea (strain 34H / ATCC BAA-681) (Vibrio psychroerythus), this protein is Large ribosomal subunit protein uL30.